Here is a 635-residue protein sequence, read N- to C-terminus: GTPase-GDP dissociation stimulator vimar (635 aa).

4 ARM repeats span residues 72-118 (KSEV…NICY), 346-391 (TDSH…NLVI), 392-432 (PKPN…MTVD), and 510-550 (RSSL…ILSV).

Interacts with Miro.

The protein resides in the endoplasmic reticulum. It localises to the mitochondrion. The protein localises to the cytoplasm. It is found in the cytosol. Functionally, probably acts as a GEF (guanine nucleotide exchange factor) for the Rho family of small GTP-binding proteins (G proteins) that stimulates the dissociation of GDP to enable subsequent binding of GTP. May also chaperone the processing and/or trafficking of small GTPases independently of GEF activity. By interacting with Miro, promotes mitochondrial fission in response to high calcium concentrations. The chain is GTPase-GDP dissociation stimulator vimar from Drosophila melanogaster (Fruit fly).